The primary structure comprises 280 residues: NAD-capped RNA hydrolase NudC (280 aa).

Substrate is bound at residue arginine 83. Residues cysteine 113, cysteine 116, cysteine 131, and cysteine 134 each contribute to the Zn(2+) site. Substrate is bound at residue tyrosine 139. A Nudix hydrolase domain is found at proline 140–leucine 268. Residues alanine 177, glutamate 193, and glutamate 197 each coordinate a divalent metal cation. The Nudix box motif lies at glycine 178–glycine 199. Position 211–218 (glutamine 211–serine 218) interacts with substrate. Glutamate 238 contributes to the a divalent metal cation binding site.

This sequence belongs to the Nudix hydrolase family. NudC subfamily. Homodimer. Mg(2+) serves as cofactor. Requires Mn(2+) as cofactor. Zn(2+) is required as a cofactor.

The enzyme catalyses a 5'-end NAD(+)-phospho-ribonucleoside in mRNA + H2O = a 5'-end phospho-adenosine-phospho-ribonucleoside in mRNA + beta-nicotinamide D-ribonucleotide + 2 H(+). It carries out the reaction NAD(+) + H2O = beta-nicotinamide D-ribonucleotide + AMP + 2 H(+). It catalyses the reaction NADH + H2O = reduced beta-nicotinamide D-ribonucleotide + AMP + 2 H(+). MRNA decapping enzyme that specifically removes the nicotinamide adenine dinucleotide (NAD) cap from a subset of mRNAs by hydrolyzing the diphosphate linkage to produce nicotinamide mononucleotide (NMN) and 5' monophosphate mRNA. The NAD-cap is present at the 5'-end of some mRNAs and stabilizes RNA against 5'-processing. Has preference for mRNAs with a 5'-end purine. Catalyzes the hydrolysis of a broad range of dinucleotide pyrophosphates. This chain is NAD-capped RNA hydrolase NudC, found in Deinococcus radiodurans (strain ATCC 13939 / DSM 20539 / JCM 16871 / CCUG 27074 / LMG 4051 / NBRC 15346 / NCIMB 9279 / VKM B-1422 / R1).